The primary structure comprises 387 residues: Phosphoglycerate kinase (387 aa).

Substrate is bound by residues 21 to 23 (DLN), arginine 36, 59 to 62 (HLGR), arginine 113, and arginine 146. ATP contacts are provided by residues lysine 197, glutamate 314, and 340-343 (GGDT).

The protein belongs to the phosphoglycerate kinase family. In terms of assembly, monomer.

It localises to the cytoplasm. It carries out the reaction (2R)-3-phosphoglycerate + ATP = (2R)-3-phospho-glyceroyl phosphate + ADP. It participates in carbohydrate degradation; glycolysis; pyruvate from D-glyceraldehyde 3-phosphate: step 2/5. This chain is Phosphoglycerate kinase, found in Marinomonas sp. (strain MWYL1).